Consider the following 409-residue polypeptide: Serine protease inhibitor 2 (409 aa).

Positions 1 to 21 (MNKLNFVILCLAALLVFDATA) are cleaved as a signal peptide. N-linked (GlcNAc...) asparagine glycans are attached at residues Asn294 and Asn324. A Hinge region; required for binding to peptidase motif is present at residues 356–360 (LGSEA).

The protein belongs to the serpin family. As to quaternary structure, forms a covalent heterodimer with protease CLIPB9; the interaction inhibits CLIPB9 protease activity. Forms a covalent heterodimer with protease CLIPB10; the interaction inhibits CLIPB10 catalytic activity. Interacts with CLIPB4 in the hemolymph of immune-challenged female mosquitoes; the interaction results in CLIPB4 inhibition. Post-translationally, protease CLIPB9 binds to SRPN2 via the hinge region resulting in the cleavage of the reactive bond. This leads to a conformational change in SRPN2 which traps CLIPB9 and distorts its active site, resulting in CLIPB9 inactivation.

It localises to the secreted. Functionally, serine protease inhibitor that functions in the melanization-mediated immune response. By preventing the activation of phenoloxidases through the inhibiting of serine proteases CLIPB9, CLIPB10 and CLIPB4, negatively regulates melanization in the hemolymph. By preventing melanization, has a detrimental role during P.berghei parasite mediated-infection and invasion of the mosquito midgut. The sequence is that of Serine protease inhibitor 2 from Anopheles gambiae (African malaria mosquito).